The primary structure comprises 407 residues: Arginine deiminase (407 aa).

The active-site Amidino-cysteine intermediate is C397.

This sequence belongs to the arginine deiminase family.

It is found in the cytoplasm. It carries out the reaction L-arginine + H2O = L-citrulline + NH4(+). It participates in amino-acid degradation; L-arginine degradation via ADI pathway; carbamoyl phosphate from L-arginine: step 1/2. The chain is Arginine deiminase from Vibrio cholerae serotype O1 (strain ATCC 39541 / Classical Ogawa 395 / O395).